The primary structure comprises 181 residues: Translation initiation factor IF-3, chloroplastic (181 aa).

Belongs to the IF-3 family. As to quaternary structure, monomer.

Its subcellular location is the plastid. The protein localises to the chloroplast. IF-3 binds to the 30S ribosomal subunit and shifts the equilibrium between 70S ribosomes and their 50S and 30S subunits in favor of the free subunits, thus enhancing the availability of 30S subunits on which protein synthesis initiation begins. The polypeptide is Translation initiation factor IF-3, chloroplastic (Galdieria sulphuraria (Red alga)).